A 146-amino-acid chain; its full sequence is D-aminoacyl-tRNA deacylase (146 aa).

The Gly-cisPro motif, important for rejection of L-amino acids signature appears at 137–138 (GP).

It belongs to the DTD family. As to quaternary structure, homodimer.

Its subcellular location is the cytoplasm. The catalysed reaction is glycyl-tRNA(Ala) + H2O = tRNA(Ala) + glycine + H(+). It catalyses the reaction a D-aminoacyl-tRNA + H2O = a tRNA + a D-alpha-amino acid + H(+). Its function is as follows. An aminoacyl-tRNA editing enzyme that deacylates mischarged D-aminoacyl-tRNAs. Also deacylates mischarged glycyl-tRNA(Ala), protecting cells against glycine mischarging by AlaRS. Acts via tRNA-based rather than protein-based catalysis; rejects L-amino acids rather than detecting D-amino acids in the active site. By recycling D-aminoacyl-tRNA to D-amino acids and free tRNA molecules, this enzyme counteracts the toxicity associated with the formation of D-aminoacyl-tRNA entities in vivo and helps enforce protein L-homochirality. This Bacillus cytotoxicus (strain DSM 22905 / CIP 110041 / 391-98 / NVH 391-98) protein is D-aminoacyl-tRNA deacylase.